The chain runs to 578 residues: Potassium-transporting ATPase potassium-binding subunit (578 aa).

10 helical membrane-spanning segments follow: residues Asn-3 to Gly-23, Ser-65 to Leu-85, Gly-134 to Ile-154, Ile-175 to Gly-195, Phe-261 to Phe-281, Ala-293 to Glu-313, Gly-397 to Gly-417, Ala-435 to Ile-455, Ile-503 to Gly-523, and Leu-543 to Pro-563.

The protein belongs to the KdpA family. In terms of assembly, the system is composed of three essential subunits: KdpA, KdpB and KdpC.

Its subcellular location is the cell membrane. In terms of biological role, part of the high-affinity ATP-driven potassium transport (or Kdp) system, which catalyzes the hydrolysis of ATP coupled with the electrogenic transport of potassium into the cytoplasm. This subunit binds the extracellular potassium ions and delivers the ions to the membrane domain of KdpB through an intramembrane tunnel. The protein is Potassium-transporting ATPase potassium-binding subunit of Clostridium perfringens (strain ATCC 13124 / DSM 756 / JCM 1290 / NCIMB 6125 / NCTC 8237 / Type A).